Consider the following 102-residue polypeptide: Small ribosomal subunit protein uS10 (102 aa).

Belongs to the universal ribosomal protein uS10 family. As to quaternary structure, part of the 30S ribosomal subunit.

Its function is as follows. Involved in the binding of tRNA to the ribosomes. This Pediococcus pentosaceus (strain ATCC 25745 / CCUG 21536 / LMG 10740 / 183-1w) protein is Small ribosomal subunit protein uS10.